The sequence spans 243 residues: Glutathione S-transferase U14 (243 aa).

The region spanning 5–87 (DTVKLIGCSD…YLDEAWPSDP (83 aa)) is the GST N-terminal domain. Glutathione contacts are provided by residues 15 to 16 (DP), 44 to 45 (EK), 58 to 59 (KT), and 71 to 72 (ES). The 128-residue stretch at 93–220 (NAYDRASARF…MPTVEEVTEL (128 aa)) folds into the GST C-terminal domain. Phosphothreonine is present on T159.

It belongs to the GST superfamily. Tau family.

It localises to the cytoplasm. Its subcellular location is the cytosol. The catalysed reaction is RX + glutathione = an S-substituted glutathione + a halide anion + H(+). May be involved in the conjugation of reduced glutathione to a wide number of exogenous and endogenous hydrophobic electrophiles and have a detoxification role against certain herbicides. This is Glutathione S-transferase U14 (GSTU14) from Arabidopsis thaliana (Mouse-ear cress).